The chain runs to 2149 residues: Serine/threonine-protein kinase WNK2 (2149 aa).

The span at 1-10 (MDGDGGRRDA) shows a compositional bias: basic and acidic residues. Disordered regions lie at residues 1 to 75 (MDGD…QRRV) and 87 to 183 (ERAR…EDDL). 2 positions are modified to omega-N-methylarginine: arginine 19 and arginine 30. Serine 45 bears the Phosphoserine mark. Residues 95 to 114 (APAPAAPAAPPGSPSVPSDP) show a composition bias toward pro residues. Residues 161–172 (AKPEPGRARKDE) show a composition bias toward basic and acidic residues. The segment covering 173-182 (PEEEEDDEDD) has biased composition (acidic residues). The 259-residue stretch at 195-453 (LKFDIELGRG…IKDLLSHAFF (259 aa)) folds into the Protein kinase domain. ATP is bound by residues serine 205, 275–278 (TELM), and lysine 325. The active-site Proton acceptor is the aspartate 342. Residues serine 352 and serine 356 each carry the phosphoserine; by autocatalysis modification. Serine 560 carries the phosphoserine modification. Disordered regions lie at residues 578 to 630 (HAQS…DSQS), 703 to 728 (SMSF…APPV), and 1067 to 1133 (QEEQ…ERAS). Positions 605-625 (ASVTSLASDSTFDSGQGSTVY) are enriched in polar residues. Residues 709–728 (VLPPPSTPVPTGPSQPAPPV) show a composition bias toward pro residues. Positions 1081–1092 (QSSESFGGSDVT) are enriched in polar residues. The residue at position 1098 (serine 1098) is a Phosphoserine. Residues 1115–1126 (ARKHHRRSTRAR) show a composition bias toward basic residues. At serine 1210 the chain carries Phosphoserine. 2 disordered regions span residues 1211-1234 (EDTD…CGLA) and 1270-1502 (PATD…GFVD). Low complexity-rich tracts occupy residues 1275–1292 (SESS…EASQ) and 1317–1353 (SQAG…STVP). Residues 1386-1400 (RSAQCTAQPLSTGQG) are compositionally biased toward polar residues. Residues 1470-1485 (LPSPPLGPTAPPPPPS) are compositionally biased toward pro residues. A phosphoserine mark is found at serine 1507, serine 1566, and serine 1594. Disordered stretches follow at residues 1521–1727 (VPTS…PSSP) and 1739–1778 (ASSI…GGVA). Residues 1553–1567 (SDKTPSLTQQTQPSL) show a composition bias toward polar residues. Positions 1587 to 1597 (SSPMTAESSSS) are enriched in low complexity. Polar residues predominate over residues 1610 to 1629 (ASDSSTAPSVPQDASGSSVP). 4 positions are modified to phosphoserine: serine 1725, serine 1726, serine 1770, and serine 1797. Polar residues predominate over residues 1916 to 1928 (ASSTGHLSDSSRG). Residues 1916 to 1947 (ASSTGHLSDSSRGPPTKDPRGTKAVQTQQPCS) form a disordered region. A Phosphoserine modification is found at serine 1962. Positions 2018–2031 (SSLYDSPGSSTSSL) are enriched in polar residues. 2 disordered regions span residues 2018–2044 (SSLY…PTLH) and 2122–2149 (GPLS…EKPD). Positions 2122–2135 (GPLSTTATPGATPA) are enriched in low complexity.

Belongs to the protein kinase superfamily. Ser/Thr protein kinase family. WNK subfamily. In terms of assembly, forms a complex with the phosphorylated form of STK39 in the brain. The cofactor is Mg(2+). Autophosphorylated. Autophosphorylation at Ser-352 and Ser-356 promotes its activity. In terms of tissue distribution, brain and heart.

Its subcellular location is the cytoplasm. The protein localises to the cell membrane. The enzyme catalyses L-seryl-[protein] + ATP = O-phospho-L-seryl-[protein] + ADP + H(+). It carries out the reaction L-threonyl-[protein] + ATP = O-phospho-L-threonyl-[protein] + ADP + H(+). With respect to regulation, activation requires autophosphorylation of Ser-356 and, to a lower extent, Ser-352. Functionally, serine/threonine-protein kinase component of the WNK2-SPAK/OSR1 kinase cascade, which plays an important role in the regulation of electrolyte homeostasis, cell signaling, survival, and proliferation. The WNK2-SPAK/OSR1 kinase cascade is composed of WNK2, which mediates phosphorylation and activation of downstream kinases OXSR1/OSR1 and STK39/SPAK. Following activation, OXSR1/OSR1 and STK39/SPAK catalyze phosphorylation of ion cotransporters, regulating their activity. Acts as an activator and inhibitor of sodium-coupled chloride cotransporters and potassium-coupled chloride cotransporters respectively. Activates SLC12A2, SCNN1A, SCNN1B, SCNN1D and SGK1 and inhibits SLC12A5. Negatively regulates the EGF-induced activation of the ERK/MAPK-pathway and the downstream cell cycle progression. Affects MAPK3/MAPK1 activity by modulating the activity of MAP2K1 and this modulation depends on phosphorylation of MAP2K1 by PAK1. WNK2 acts by interfering with the activity of PAK1 by controlling the balance of the activity of upstream regulators of PAK1 activity, RHOA and RAC1, which display reciprocal activity. This Mus musculus (Mouse) protein is Serine/threonine-protein kinase WNK2.